Consider the following 398-residue polypeptide: Cystathionine gamma-lyase (398 aa).

A Phosphoserine modification is found at serine 50. Substrate contacts are provided by arginine 61, tyrosine 113, and arginine 118. Lysine 211 bears the N6-(pyridoxal phosphate)lysine mark. Position 338 (glutamate 338) interacts with substrate.

It belongs to the trans-sulfuration enzymes family. In terms of assembly, homotetramer. Interacts with CALM in a calcium-dependent manner. The cofactor is pyridoxal 5'-phosphate.

The protein resides in the cytoplasm. The catalysed reaction is L,L-cystathionine + H2O = 2-oxobutanoate + L-cysteine + NH4(+). The enzyme catalyses L-homoserine = 2-oxobutanoate + NH4(+). It carries out the reaction L-selenocystathionine + H2O = L-selenocysteine + 2-oxobutanoate + NH4(+). It catalyses the reaction L-cysteine + H2O = hydrogen sulfide + pyruvate + NH4(+) + H(+). The catalysed reaction is L-homocysteine + H2O = 2-oxobutanoate + hydrogen sulfide + NH4(+) + H(+). The protein operates within amino-acid biosynthesis; L-cysteine biosynthesis; L-cysteine from L-homocysteine and L-serine: step 2/2. In terms of biological role, catalyzes the last step in the trans-sulfuration pathway from L-methionine to L-cysteine in a pyridoxal-5'-phosphate (PLP)-dependent manner, which consists on cleaving the L,L-cystathionine molecule into L-cysteine, ammonia and 2-oxobutanoate. Part of the L-cysteine derived from the trans-sulfuration pathway is utilized for biosynthesis of the ubiquitous antioxidant glutathione. Besides its role in the conversion of L-cystathionine into L-cysteine, it utilizes L-cysteine and L-homocysteine as substrates (at much lower rates than L,L-cystathionine) to produce hydrogen sulfide (H2S). In vitro, it converts two L-cysteine molecules into lanthionine and H2S, and two L-homocysteine molecules to homolanthionine and H2S, which can be particularly relevant under conditions of severe hyperhomocysteinemia. Lanthionine and homolanthionine are structural homologs of L,L-cystathionine that differ by the absence or presence of an extra methylene group, respectively. Acts as a cysteine-protein sulfhydrase by mediating sulfhydration of target proteins: sulfhydration consists of converting -SH groups into -SSH on specific cysteine residues of target proteins such as GAPDH, PTPN1 and NF-kappa-B subunit RELA, thereby regulating their function. By generating the gasotransmitter H2S, it participates in a number of physiological processes such as vasodilation, bone protection, and inflammation. Plays an essential role in myogenesis by contributing to the biogenesis of H2S in skeletal muscle tissue. Can also accept homoserine as substrate. Catalyzes the elimination of selenocystathionine (which can be derived from the diet) to yield selenocysteine, ammonia and 2-oxobutanoate. In Rattus norvegicus (Rat), this protein is Cystathionine gamma-lyase (Cth).